A 694-amino-acid polypeptide reads, in one-letter code: Elongation factor G (694 aa).

Residues 8-285 form the tr-type G domain; that stretch reads EKVRNIGIAA…AVVELLPSPQ (278 aa). GTP contacts are provided by residues 17–24, 81–85, and 135–138; these read AHIDAGKT, DTPGH, and NKMD.

It belongs to the TRAFAC class translation factor GTPase superfamily. Classic translation factor GTPase family. EF-G/EF-2 subfamily.

Its subcellular location is the cytoplasm. Its function is as follows. Catalyzes the GTP-dependent ribosomal translocation step during translation elongation. During this step, the ribosome changes from the pre-translocational (PRE) to the post-translocational (POST) state as the newly formed A-site-bound peptidyl-tRNA and P-site-bound deacylated tRNA move to the P and E sites, respectively. Catalyzes the coordinated movement of the two tRNA molecules, the mRNA and conformational changes in the ribosome. This is Elongation factor G (fusA) from Synechococcus sp. (strain ATCC 27144 / PCC 6301 / SAUG 1402/1) (Anacystis nidulans).